We begin with the raw amino-acid sequence, 72 residues long: General transcription factor IIH subunit 5 (72 aa).

It belongs to the TFB5 family. As to quaternary structure, component of the 7-subunit TFIIH core complex composed of XPB/repB, XPD/repD, gtf2h1, gtf2h2, gtf2h3, gtf2h4 and gtf2h5, which is active in NER. The core complex associates with the 3-subunit CDK-activating kinase (CAK) module composed of cycH/cyclin H, cdk7 and mnat1 to form the 10-subunit holoenzyme (holo-TFIIH) active in transcription.

The protein localises to the nucleus. Component of the general transcription and DNA repair factor IIH (TFIIH) core complex, which is involved in general and transcription-coupled nucleotide excision repair (NER) of damaged DNA and, when complexed to CAK, in RNA transcription by RNA polymerase II. In NER, TFIIH acts by opening DNA around the lesion to allow the excision of the damaged oligonucleotide and its replacement by a new DNA fragment. In transcription, TFIIH has an essential role in transcription initiation. When the pre-initiation complex (PIC) has been established, TFIIH is required for promoter opening and promoter escape. Phosphorylation of the C-terminal tail (CTD) of the largest subunit of RNA polymerase II by the kinase module CAK controls the initiation of transcription. The protein is General transcription factor IIH subunit 5 (gtf2h5) of Dictyostelium discoideum (Social amoeba).